The chain runs to 264 residues: 5'-nucleotidase SurE (264 aa).

4 residues coordinate a divalent metal cation: Asp10, Asp11, Ser43, and Asn99.

This sequence belongs to the SurE nucleotidase family. A divalent metal cation serves as cofactor.

It localises to the cytoplasm. The enzyme catalyses a ribonucleoside 5'-phosphate + H2O = a ribonucleoside + phosphate. Its function is as follows. Nucleotidase that shows phosphatase activity on nucleoside 5'-monophosphates. The protein is 5'-nucleotidase SurE of Methanococcus maripaludis (strain C5 / ATCC BAA-1333).